We begin with the raw amino-acid sequence, 123 residues long: Small ribosomal subunit protein uS12 (123 aa).

A disordered region spans residues 1–21; sequence MPTIEQLVRKGRQAKPKKSKT. The span at 9 to 20 shows a compositional bias: basic residues; the sequence is RKGRQAKPKKSK. Position 89 is a 3-methylthioaspartic acid (D89).

The protein belongs to the universal ribosomal protein uS12 family. In terms of assembly, part of the 30S ribosomal subunit. Contacts proteins S8 and S17. May interact with IF1 in the 30S initiation complex.

Its function is as follows. With S4 and S5 plays an important role in translational accuracy. Interacts with and stabilizes bases of the 16S rRNA that are involved in tRNA selection in the A site and with the mRNA backbone. Located at the interface of the 30S and 50S subunits, it traverses the body of the 30S subunit contacting proteins on the other side and probably holding the rRNA structure together. The combined cluster of proteins S8, S12 and S17 appears to hold together the shoulder and platform of the 30S subunit. The polypeptide is Small ribosomal subunit protein uS12 (Bifidobacterium longum subsp. infantis (strain ATCC 15697 / DSM 20088 / JCM 1222 / NCTC 11817 / S12)).